The sequence spans 298 residues: Lipoyl synthase (298 aa).

C40, C45, C51, C67, C71, C74, and S280 together coordinate [4Fe-4S] cluster. Positions 53–269 (AVRRTATFMI…KEIALSKGFT (217 aa)) constitute a Radical SAM core domain.

Belongs to the radical SAM superfamily. Lipoyl synthase family. It depends on [4Fe-4S] cluster as a cofactor.

It is found in the cytoplasm. The enzyme catalyses [[Fe-S] cluster scaffold protein carrying a second [4Fe-4S](2+) cluster] + N(6)-octanoyl-L-lysyl-[protein] + 2 oxidized [2Fe-2S]-[ferredoxin] + 2 S-adenosyl-L-methionine + 4 H(+) = [[Fe-S] cluster scaffold protein] + N(6)-[(R)-dihydrolipoyl]-L-lysyl-[protein] + 4 Fe(3+) + 2 hydrogen sulfide + 2 5'-deoxyadenosine + 2 L-methionine + 2 reduced [2Fe-2S]-[ferredoxin]. It functions in the pathway protein modification; protein lipoylation via endogenous pathway; protein N(6)-(lipoyl)lysine from octanoyl-[acyl-carrier-protein]. Its function is as follows. Catalyzes the radical-mediated insertion of two sulfur atoms into the C-6 and C-8 positions of the octanoyl moiety bound to the lipoyl domains of lipoate-dependent enzymes, thereby converting the octanoylated domains into lipoylated derivatives. This is Lipoyl synthase from Geobacillus sp. (strain WCH70).